Here is a 346-residue protein sequence, read N- to C-terminus: Eukaryotic translation initiation factor 3 subunit I (346 aa).

WD repeat units follow at residues 8-49 (GHER…GTYH), 50-91 (GHQG…KTWD), 145-184 (CEDS…LLYN), 189-228 (ELNQ…VLKT), and 286-325 (GHFG…FDFM).

It belongs to the eIF-3 subunit I family. Component of the eukaryotic translation initiation factor 3 (eIF-3) complex.

The protein resides in the cytoplasm. Component of the eukaryotic translation initiation factor 3 (eIF-3) complex, which is involved in protein synthesis of a specialized repertoire of mRNAs and, together with other initiation factors, stimulates binding of mRNA and methionyl-tRNAi to the 40S ribosome. The eIF-3 complex specifically targets and initiates translation of a subset of mRNAs involved in cell proliferation. In Neurospora crassa (strain ATCC 24698 / 74-OR23-1A / CBS 708.71 / DSM 1257 / FGSC 987), this protein is Eukaryotic translation initiation factor 3 subunit I (tif-34).